Consider the following 230-residue polypeptide: Uracil-DNA glycosylase (230 aa).

D71 (proton acceptor) is an active-site residue.

Belongs to the uracil-DNA glycosylase (UDG) superfamily. UNG family.

The protein resides in the cytoplasm. The enzyme catalyses Hydrolyzes single-stranded DNA or mismatched double-stranded DNA and polynucleotides, releasing free uracil.. Excises uracil residues from the DNA which can arise as a result of misincorporation of dUMP residues by DNA polymerase or due to deamination of cytosine. The protein is Uracil-DNA glycosylase of Tropheryma whipplei (strain TW08/27) (Whipple's bacillus).